A 942-amino-acid polypeptide reads, in one-letter code: Protein translocase subunit SecA (942 aa).

Residues glutamine 90, glycine 108–threonine 112, and aspartate 509 contribute to the ATP site.

Belongs to the SecA family. Monomer and homodimer. Part of the essential Sec protein translocation apparatus which comprises SecA, SecYEG and auxiliary proteins SecDF. Other proteins may also be involved.

It is found in the cell inner membrane. It localises to the cellular thylakoid membrane. Its subcellular location is the cytoplasm. It carries out the reaction ATP + H2O + cellular proteinSide 1 = ADP + phosphate + cellular proteinSide 2.. Part of the Sec protein translocase complex. Interacts with the SecYEG preprotein conducting channel. Has a central role in coupling the hydrolysis of ATP to the transfer of proteins into and across the cell membrane, serving as an ATP-driven molecular motor driving the stepwise translocation of polypeptide chains across the membrane. In terms of biological role, probably participates in protein translocation into and across both the cytoplasmic and thylakoid membranes in cyanobacterial cells. The sequence is that of Protein translocase subunit SecA from Prochlorococcus marinus (strain NATL2A).